Here is a 72-residue protein sequence, read N- to C-terminus: UPF0270 protein YheU (72 aa).

It belongs to the UPF0270 family.

The protein is UPF0270 protein YheU of Shigella flexneri serotype 5b (strain 8401).